Reading from the N-terminus, the 158-residue chain is SsrA-binding protein (158 aa).

It belongs to the SmpB family.

Its subcellular location is the cytoplasm. Its function is as follows. Required for rescue of stalled ribosomes mediated by trans-translation. Binds to transfer-messenger RNA (tmRNA), required for stable association of tmRNA with ribosomes. tmRNA and SmpB together mimic tRNA shape, replacing the anticodon stem-loop with SmpB. tmRNA is encoded by the ssrA gene; the 2 termini fold to resemble tRNA(Ala) and it encodes a 'tag peptide', a short internal open reading frame. During trans-translation Ala-aminoacylated tmRNA acts like a tRNA, entering the A-site of stalled ribosomes, displacing the stalled mRNA. The ribosome then switches to translate the ORF on the tmRNA; the nascent peptide is terminated with the 'tag peptide' encoded by the tmRNA and targeted for degradation. The ribosome is freed to recommence translation, which seems to be the essential function of trans-translation. This is SsrA-binding protein from Hydrogenovibrio crunogenus (strain DSM 25203 / XCL-2) (Thiomicrospira crunogena).